A 405-amino-acid chain; its full sequence is MADRSDIIIENYQVSPRIGFLPDKPPLARLPHPYYAGWEETISRVAPSRGDGRAREYIDEMPLLSTGKLRVLPEWHRAYTLLSILSQVYIWDGDEPSNRIPASIASPLLAVSEHLGLNPCASFASFCLWNIRPVGRHGLNYAAAYEPENLGQITSFTGTTDEEWFFSISAAIEARGGCLIPGMFDTIEAAREGNSQRVQEFLGTLASCVRHMCKDLKRMYEGCAPSVFYHDVRPFLNGGKGVNKDTQTPGGVFYENESGGGQWHQYQGGSNAQSSLIQLLDIFLGVDHSITAANKPHEGYHREMQSYMPGKHRQFLQLMSRLSNVREFVLCHPVTAEIRIEYSRATAELVALRQTHMIMASRYIVMQGRKGSMCRDSSKGTGGTEFMPFLKDARDCTLATCCPRP.

His312 contacts heme.

The protein belongs to the indoleamine 2,3-dioxygenase family. The cofactor is heme.

It catalyses the reaction L-tryptophan + O2 = N-formyl-L-kynurenine. It participates in secondary metabolite biosynthesis. Its function is as follows. Indoleamine 2,3-dioxygenase; part of the gene cluster that mediates the biosynthesis of aspcandine, a pyrrolobenzazepine alkaloid. Initially, the indoleamine 2,3-dioxygenase acdA accepts L-tryptophan and performs the oxidative opening of the indole ring to yield N'-formyl-L-kynurenine, which undergoes the spontaneous deformylation reaction to provide L-kynurenine. The kynurenine 3-monooxygenase acdD then hydroxylates L-kynurenine to afford 3-hydroxy-L-kynurenine. 3-hydroxy-L-kynurenine is activated by the A domain of the NRPS-PKS acdB and subsequently loaded onto the enzyme. The KS domain conducts the decarboxylative condensation of the 3-hydroxy-L-kynurenyl and malonyl moieties, and subsequent nucleophilic attacks by the two amino groups would occur nonenzymatically at two distinct positions, achieving the chain release and the construction of the tricyclic system. Finally, a dehydration reaction completes the biosynthesis to yield aspcandine. The polypeptide is Indoleamine 2,3-dioxygenase acdA (Aspergillus candidus).